The primary structure comprises 79 residues: UPF0154 protein Lm4b_01315 (79 aa).

A helical transmembrane segment spans residues 2–22 (WIYILVGIICLLAGLAGGFFI). A compositionally biased stretch (polar residues) spans 57-66 (KINQMMSAMN). Residues 57 to 79 (KINQMMSAMNKQQEKEKPKKTKK) form a disordered region.

The protein belongs to the UPF0154 family.

It is found in the cell membrane. This chain is UPF0154 protein Lm4b_01315, found in Listeria monocytogenes serotype 4b (strain CLIP80459).